The primary structure comprises 116 residues: Large ribosomal subunit protein bL17 (116 aa).

The protein belongs to the bacterial ribosomal protein bL17 family. In terms of assembly, part of the 50S ribosomal subunit. Contacts protein L32.

This Gloeobacter violaceus (strain ATCC 29082 / PCC 7421) protein is Large ribosomal subunit protein bL17.